The chain runs to 94 residues: Conotoxin Im026 (94 aa).

Positions 1–24 are cleaved as a signal peptide; that stretch reads MRLTTMHSVILMLLLVFAFDNVDG. A propeptide spanning residues 25 to 59 is cleaved from the precursor; that stretch reads DEPGQTARDVDNRNFMSILRSEGKPVHFLRAIKKR.

Contains 4 disulfide bonds. Expressed by the venom duct.

The protein localises to the secreted. Its function is as follows. Probable neurotoxin. The protein is Conotoxin Im026 of Conus imperialis (Imperial cone).